The sequence spans 386 residues: Acyl-lipid omega-3 desaturase (cytochrome b5), endoplasmic reticulum (386 aa).

Positions 1 to 30 (MVVAMDQRTNVNGDPGAGDRKKEERFDPSA) are disordered. Basic and acidic residues predominate over residues 17 to 27 (AGDRKKEERFD). Residues 63-83 (IIAVAALAIAAVYVDSWFLWP) traverse the membrane as a helical segment. The Histidine box-1 motif lies at 101–105 (HDCGH). Positions 137–141 (HRTHH) match the Histidine box-2 motif. A run of 2 helical transmembrane segments spans residues 220–240 (WSIM…LAVL) and 242–262 (VYGV…YLHH). The short motif at 304-308 (HVIHH) is the Histidine box-3 element.

This sequence belongs to the fatty acid desaturase type 1 family. As to expression, abundant in leaves and seedlings. Barely detectable in root tissue.

The protein resides in the endoplasmic reticulum membrane. The catalysed reaction is a (9Z,12Z)-octadecadienoyl-containing glycerolipid + 2 Fe(II)-[cytochrome b5] + O2 + 2 H(+) = (9Z,12Z,15Z)-octadecatrienoyl-containing glycerolipid + 2 Fe(III)-[cytochrome b5] + 2 H2O. Its pathway is lipid metabolism; polyunsaturated fatty acid biosynthesis. Microsomal (ER) omega-3 fatty acid desaturase introduces the third double bond in the biosynthesis of 18:3 fatty acids, important constituents of plant membranes. It is thought to use cytochrome b5 as an electron donor and to act on fatty acids esterified to phosphatidylcholine and, possibly, other phospholipids. In Arabidopsis thaliana (Mouse-ear cress), this protein is Acyl-lipid omega-3 desaturase (cytochrome b5), endoplasmic reticulum.